A 386-amino-acid chain; its full sequence is Histone-lysine N-methyltransferase SETD7 (386 aa).

A compositionally biased stretch (acidic residues) spans Met-1 to Glu-12. The tract at residues Met-1 to Asp-21 is disordered. MORN repeat units follow at residues Tyr-15 to Glu-38, Phe-39 to Thr-61, Leu-62 to Ile-84, and Phe-109 to Ser-131. Residues Glu-222–Thr-344 form the SET domain. S-adenosyl-L-methionine contacts are provided by residues Ala-234 to Glu-236, Asn-304, and His-305.

The protein belongs to the class V-like SAM-binding methyltransferase superfamily. Histone-lysine methyltransferase family. SET7 subfamily.

It is found in the nucleus. It localises to the chromosome. The enzyme catalyses L-lysyl(4)-[histone H3] + S-adenosyl-L-methionine = N(6)-methyl-L-lysyl(4)-[histone H3] + S-adenosyl-L-homocysteine + H(+). The catalysed reaction is L-lysyl-[protein] + S-adenosyl-L-methionine = N(6)-methyl-L-lysyl-[protein] + S-adenosyl-L-homocysteine + H(+). Functionally, histone methyltransferase that specifically monomethylates 'Lys-4' of histone H3. H3 'Lys-4' methylation represents a specific tag for epigenetic transcriptional activation. Plays a central role in the transcriptional activation of genes. Also has methyltransferase activity toward non-histone proteins. The chain is Histone-lysine N-methyltransferase SETD7 (setd7) from Halocynthia roretzi (Sea squirt).